The sequence spans 700 residues: Glycine--tRNA ligase beta subunit (700 aa).

This sequence belongs to the class-II aminoacyl-tRNA synthetase family. Tetramer of two alpha and two beta subunits.

It localises to the cytoplasm. The catalysed reaction is tRNA(Gly) + glycine + ATP = glycyl-tRNA(Gly) + AMP + diphosphate. The chain is Glycine--tRNA ligase beta subunit from Magnetococcus marinus (strain ATCC BAA-1437 / JCM 17883 / MC-1).